A 396-amino-acid polypeptide reads, in one-letter code: Elongation factor Tu (396 aa).

One can recognise a tr-type G domain in the interval 10–206 (KPHCNIGTIG…AVDAYIPQPE (197 aa)). Positions 19-26 (GHVDHGKT) are G1. 19–26 (GHVDHGKT) provides a ligand contact to GTP. A Mg(2+)-binding site is contributed by T26. Residues 60-64 (GITIS) are G2. Residues 81 to 84 (DCPG) form a G3 region. Residues 81–85 (DCPGH) and 136–139 (NKVD) contribute to the GTP site. Residues 136-139 (NKVD) form a G4 region. The G5 stretch occupies residues 174 to 176 (SAL).

It belongs to the TRAFAC class translation factor GTPase superfamily. Classic translation factor GTPase family. EF-Tu/EF-1A subfamily. Monomer.

The protein localises to the cytoplasm. It catalyses the reaction GTP + H2O = GDP + phosphate + H(+). GTP hydrolase that promotes the GTP-dependent binding of aminoacyl-tRNA to the A-site of ribosomes during protein biosynthesis. This chain is Elongation factor Tu, found in Granulibacter bethesdensis (strain ATCC BAA-1260 / CGDNIH1).